The sequence spans 334 residues: NmrA-like family domain-containing oxidoreductase lnaB (334 aa).

NADP(+)-binding positions include 12–17, 38–42, 59–60, 80–82, K138, and 162–165; these read GGTGKQ, RNAQS, DG, INS, and FLEN.

This sequence belongs to the NmrA-type oxidoreductase family.

Its pathway is secondary metabolite biosynthesis. In terms of biological role, nmrA-like family domain-containing oxidoreductase; part of the lna gene cluster that mediates the biosynthesis of diastereomeric piperazines. Lna and lnb clusters encode sets of enzymes that produce overlapping sets of previously undescribed metabolites such as piperazinomycin-like metabolites or morpholine. The lna and lnb biosynthetic pathways appear to be part of a signaling network that controls the formation of sclerotia, a resilient overwintering structure. One primary function of the non-canonical nonribosomal peptide synthetases lnaA and lnbA consists in the reduction of L-tyrosine. The presence in the clusters of tailoring enzymes such as the oxidoreductases lnaB, lnbB, lnaE or lnbE, as well as of the cytochrome P450 monooxygenases lnaC, lnaD, or lnbC, might explain formation of various diastereomeric piperazines. This Aspergillus flavus (strain ATCC 200026 / FGSC A1120 / IAM 13836 / NRRL 3357 / JCM 12722 / SRRC 167) protein is NmrA-like family domain-containing oxidoreductase lnaB.